The sequence spans 268 residues: Elongation factor Ts (268 aa).

The interval 81-84 is involved in Mg(2+) ion dislocation from EF-Tu; it reads TDFV.

Belongs to the EF-Ts family.

It localises to the cytoplasm. In terms of biological role, associates with the EF-Tu.GDP complex and induces the exchange of GDP to GTP. It remains bound to the aminoacyl-tRNA.EF-Tu.GTP complex up to the GTP hydrolysis stage on the ribosome. In Buchnera aphidicola subsp. Acyrthosiphon pisum (strain 5A), this protein is Elongation factor Ts.